We begin with the raw amino-acid sequence, 187 residues long: Casparian strip membrane protein 5 (187 aa).

Topologically, residues 1–24 are cytoplasmic; it reads MKSGQAEIVETSKGIQKSGLMSRR. Residues 25–45 form a helical membrane-spanning segment; the sequence is IAILEFILRIVAFFNTIGSAI. At 46–74 the chain is on the extracellular side; sequence LMGTTHETLPFFTQFIRFQAEYNDLPALT. Residues 75 to 95 traverse the membrane as a helical segment; that stretch reads FFVVANAVVSGYLIMSLTLAF. The Cytoplasmic portion of the chain corresponds to 96–107; sequence VHIVKRKTQNTR. A helical transmembrane segment spans residues 108 to 128; the sequence is ILLIVLDVAMLGLLSAGASSA. Residues 129-161 lie on the Extracellular side of the membrane; sequence AAIVYLAHNGNNKTNWFAICQQFNSFCERISGS. A glycan (N-linked (GlcNAc...) asparagine) is linked at asparagine 140. A helical transmembrane segment spans residues 162–182; that stretch reads LIGSFIAVVLLILLILLSAIA. Residues 183–187 lie on the Cytoplasmic side of the membrane; the sequence is LSRRH.

Belongs to the Casparian strip membrane proteins (CASP) family. As to quaternary structure, homodimer and heterodimers.

The protein resides in the cell membrane. Regulates membrane-cell wall junctions and localized cell wall deposition. Required for establishment of the Casparian strip membrane domain (CSD) and the subsequent formation of Casparian strips, a cell wall modification of the root endodermis that determines an apoplastic barrier between the intraorganismal apoplasm and the extraorganismal apoplasm and prevents lateral diffusion. This is Casparian strip membrane protein 5 from Arabidopsis lyrata subsp. lyrata (Lyre-leaved rock-cress).